Consider the following 568-residue polypeptide: TWiK family of potassium channels protein 9 (568 aa).

Residues Met-1–Ser-15 lie on the Cytoplasmic side of the membrane. A helical membrane pass occupies residues Thr-16 to Leu-36. Residues Ile-163–Ala-183 constitute an intramembrane region (pore-forming). A helical transmembrane segment spans residues Leu-191–Leu-211. Residues Gly-212–Ser-316 lie on the Cytoplasmic side of the membrane. Disordered regions lie at residues Gln-243–Val-262 and Met-274–Glu-314. The segment covering Gly-297 to Asn-307 has biased composition (acidic residues). The chain crosses the membrane as a helical span at residues Ile-317–Tyr-337. The segment at residues Phe-343 to Val-363 is an intramembrane region (pore-forming). A helical membrane pass occupies residues Leu-370–Ile-390. The Cytoplasmic segment spans residues Ala-391–Lys-568.

The protein belongs to the two pore domain potassium channel (TC 1.A.1.8) family. As to expression, expressed in ray A-type neurons and cell bodies. Also seen in head, pharyngeal and phasmid neurons, and in coelomocytes.

The protein resides in the membrane. Potassium channel protein that may be component of regulatory network that controls ray development and function. The chain is TWiK family of potassium channels protein 9 (twk-9) from Caenorhabditis elegans.